The primary structure comprises 103 residues: Small ribosomal subunit protein uS10 (103 aa).

Belongs to the universal ribosomal protein uS10 family. Part of the 30S ribosomal subunit.

In terms of biological role, involved in the binding of tRNA to the ribosomes. The chain is Small ribosomal subunit protein uS10 from Korarchaeum cryptofilum (strain OPF8).